The primary structure comprises 316 residues: Glutathione synthetase (316 aa).

One can recognise an ATP-grasp domain in the interval 124–310 (EKLFTAWFPE…ITGKLMDAIE (187 aa)). Residue 150 to 207 (FREEHGDVILKPLDGMGGASIFRVKENDPNVSVIIETLTNHGQNYAMAQTFVPDISNG) participates in ATP binding. Residues glutamate 281 and asparagine 283 each coordinate Mg(2+).

Belongs to the prokaryotic GSH synthase family. Mg(2+) serves as cofactor. The cofactor is Mn(2+).

It carries out the reaction gamma-L-glutamyl-L-cysteine + glycine + ATP = glutathione + ADP + phosphate + H(+). It functions in the pathway sulfur metabolism; glutathione biosynthesis; glutathione from L-cysteine and L-glutamate: step 2/2. This Vibrio parahaemolyticus serotype O3:K6 (strain RIMD 2210633) protein is Glutathione synthetase.